Here is a 354-residue protein sequence, read N- to C-terminus: Uroporphyrinogen decarboxylase (354 aa).

Substrate is bound by residues 27–31, D77, Y154, T209, and H327; that span reads RQAGR.

The protein belongs to the uroporphyrinogen decarboxylase family. In terms of assembly, homodimer.

Its subcellular location is the cytoplasm. It carries out the reaction uroporphyrinogen III + 4 H(+) = coproporphyrinogen III + 4 CO2. Its pathway is porphyrin-containing compound metabolism; protoporphyrin-IX biosynthesis; coproporphyrinogen-III from 5-aminolevulinate: step 4/4. Its function is as follows. Catalyzes the decarboxylation of four acetate groups of uroporphyrinogen-III to yield coproporphyrinogen-III. In Salmonella arizonae (strain ATCC BAA-731 / CDC346-86 / RSK2980), this protein is Uroporphyrinogen decarboxylase.